The sequence spans 183 residues: ATP-dependent protease subunit HslV (183 aa).

Thr-13 is an active-site residue. 3 residues coordinate Na(+): Gly-168, Cys-171, and Thr-174.

The protein belongs to the peptidase T1B family. HslV subfamily. A double ring-shaped homohexamer of HslV is capped on each side by a ring-shaped HslU homohexamer. The assembly of the HslU/HslV complex is dependent on binding of ATP.

Its subcellular location is the cytoplasm. It catalyses the reaction ATP-dependent cleavage of peptide bonds with broad specificity.. With respect to regulation, allosterically activated by HslU binding. Protease subunit of a proteasome-like degradation complex believed to be a general protein degrading machinery. This Xanthomonas campestris pv. campestris (strain ATCC 33913 / DSM 3586 / NCPPB 528 / LMG 568 / P 25) protein is ATP-dependent protease subunit HslV.